A 557-amino-acid polypeptide reads, in one-letter code: Formate--tetrahydrofolate ligase 2 (557 aa).

66 to 73 contributes to the ATP binding site; that stretch reads TPAGEGKT.

The protein belongs to the formate--tetrahydrofolate ligase family.

The enzyme catalyses (6S)-5,6,7,8-tetrahydrofolate + formate + ATP = (6R)-10-formyltetrahydrofolate + ADP + phosphate. The protein operates within one-carbon metabolism; tetrahydrofolate interconversion. The chain is Formate--tetrahydrofolate ligase 2 from Streptococcus pyogenes serotype M18 (strain MGAS8232).